Here is a 326-residue protein sequence, read N- to C-terminus: Protein-arginine N-acetylglucosaminyltransferase NleB2 (326 aa).

UDP-N-acetyl-alpha-D-glucosamine is bound by residues 45–47 (QWF), tyrosine 69, and 216–219 (YLDM). The short motif at 218-220 (DMD) is the DXD motif element. Residue aspartate 220 participates in Mn(2+) binding. The active-site Proton acceptor is glutamate 250. The Mn(2+) site is built by asparagine 317 and serine 319. UDP-N-acetyl-alpha-D-glucosamine contacts are provided by residues serine 319 and 324-326 (SSW).

The protein belongs to the glycosyltransferase NleB family. Mn(2+) serves as cofactor.

It localises to the secreted. It is found in the host cell. The catalysed reaction is L-arginyl-[protein] + UDP-N-acetyl-alpha-D-glucosamine = N(omega)-(N-acetyl-beta-D-glucosaminyl)-L-arginyl-[protein] + UDP + H(+). Its function is as follows. Protein-arginine N-acetylglucosaminyltransferase effector that catalyzes the transfer of a single N-acetylglucosamine (GlcNAc) to a conserved arginine residue of host target proteins. In contrast to NleB1, not able to disrupt TNF signaling in infected cells. Shows a lower enzymatic activity than NleB1. The polypeptide is Protein-arginine N-acetylglucosaminyltransferase NleB2 (Escherichia coli O145:H28 (strain RM12581)).